The sequence spans 309 residues: Olfactory receptor 4B1 (309 aa).

Residues 1 to 23 (MASTSNVTELIFTGLFQDPAVQS) are Extracellular-facing. Asn-6 is a glycosylation site (N-linked (GlcNAc...) asparagine). Residues 24-47 (VCFVVFLPVYLATVVGNGLIVLTV) form a helical membrane-spanning segment. At 48-55 (SISKSLDS) the chain is on the cytoplasmic side. Residues 56-77 (PMYFFLSCLSLVEISYSSTIAP) form a helical membrane-spanning segment. Residues 78–98 (KFIIDLLAKIKTISLEGCLTQ) lie on the Extracellular side of the membrane. A disulfide bridge links Cys-95 with Cys-187. The helical transmembrane segment at 99–118 (IFFFHFFGVAEILLIVVMAY) threads the bilayer. The Cytoplasmic portion of the chain corresponds to 119 to 137 (DCYVAICKPLHYMNIISRQ). The helical transmembrane segment at 138–156 (LCHLLVAGSWLGGFCHSII) threads the bilayer. Residues 157 to 193 (QILVIIQLPFCGPNVIDHYFCDLQPLFKLACTDTFME) are Extracellular-facing. The chain crosses the membrane as a helical span at residues 194–217 (GVIVLANSGLFSVFSFLILVSSYI). Residues 218 to 233 (VILVNLRNHSAEGRHK) lie on the Cytoplasmic side of the membrane. The chain crosses the membrane as a helical span at residues 234 to 256 (ALSTCASHITVVILFFGPAIFLY). At 257 to 267 (MRPSSTFTEDK) the chain is on the extracellular side. The helical transmembrane segment at 268–287 (LVAVFYTVITPMLNPIIYTL) threads the bilayer. Over 288 to 309 (RNAEVKIAIRRLWSKKENPGRE) the chain is Cytoplasmic.

This sequence belongs to the G-protein coupled receptor 1 family.

It localises to the cell membrane. Functionally, odorant receptor. The polypeptide is Olfactory receptor 4B1 (OR4B1) (Homo sapiens (Human)).